The sequence spans 409 residues: Elongation factor Tu (409 aa).

The tr-type G domain occupies 10–214 (KPHVNIGTIG…AVDDNIPEPE (205 aa)). Residues 19 to 26 (GHVDHGKT) are G1. Residue 19 to 26 (GHVDHGKT) participates in GTP binding. Threonine 26 contacts Mg(2+). The G2 stretch occupies residues 60–64 (GITIN). A G3 region spans residues 81 to 84 (DCPG). GTP contacts are provided by residues 81 to 85 (DCPGH) and 136 to 139 (NKKD). Positions 136–139 (NKKD) are G4. The tract at residues 174-176 (SAL) is G5.

This sequence belongs to the TRAFAC class translation factor GTPase superfamily. Classic translation factor GTPase family. EF-Tu/EF-1A subfamily. As to quaternary structure, monomer.

It localises to the cytoplasm. The catalysed reaction is GTP + H2O = GDP + phosphate + H(+). Its function is as follows. GTP hydrolase that promotes the GTP-dependent binding of aminoacyl-tRNA to the A-site of ribosomes during protein biosynthesis. The chain is Elongation factor Tu from Crocosphaera subtropica (strain ATCC 51142 / BH68) (Cyanothece sp. (strain ATCC 51142)).